Consider the following 37-residue polypeptide: MKVYPSIRIMCNKCRIIRRKGIIRVICPNSKHKQRQK.

The protein belongs to the bacterial ribosomal protein bL36 family.

It localises to the plastid. The protein is Large ribosomal subunit protein bL36c of Helicosporidium sp. subsp. Simulium jonesii (Green alga).